Reading from the N-terminus, the 816-residue chain is MTGVCGCCGALRPRYKRLVDNIFPEDPEDGLVKANMEKLTFYALSAPEKLDRIGAYLSERLSRDVARHRYGYVCIAMEALDQLLMACHCQSINLFVESFLKMVRKLLEADKPNLQILGTNSFVKFANIEEDTPSYHRSYDFFVSRFSEMCHSGYEDPDIRTKIRMAGIKGLQGVVRKTVNDELQANIWDPQHMDKIVPSLLFNLQSGEGTESRSPSPLQASEKEKESPAELTERCFRELLGRAAYGNIKNAVTPVLMHLDNHSLWEGKTFAVRCFKIIMYSIQSQHSHLVIQQLLGHLDANSKSSATVRAGIVEVLLEVAAIAASGSVGPTVLEVFNTLLRHLRLSVDYELTGSYDCTNIGTKIIKEHEERQLQEAVIRTIGSFANTLPTYQRSEVMLFIMGKVPIPGLHPTLPSIGSGPEGNRMIQVMLLKSLRQVTCGFQTTNMLTALPNSFLDPMLSFALLEDAEIRLLVLEILVSLIDRHDNLPKFSNISIISDISVLKLKVDKCSRQDNLFMKKHAQHLYRHIYLCSKEQSSVQPHFEKLYSLLALISMELANEEVVVDLIRVALALQDLALSSEEMLPVYNRCAIHALSSAYLNLISQLTTVPAFCQHVHEVIEMRQKEIPYLLPEDVFIENPKIPKTLEKLEGDVLFQQAKITEVLGGSGYNTERLATPYVPQFTDEDRLSKRKSIGETISLQVEVDSRNSPEKEERTPAEEITFETLKNAIVDSVGVEEQEKERRRQVVEKFQKAPFEEIAAHCGARATMLQSKLNQIFEITIRPPPSPSGTITSSYGQTQSRSVPVYEMKFPDLCVY.

A compositionally biased stretch (polar residues) spans 206–219 (SGEGTESRSPSPLQ). Positions 206-230 (SGEGTESRSPSPLQASEKEKESPAE) are disordered. Residues 221-230 (SEKEKESPAE) show a composition bias toward basic and acidic residues.

This sequence belongs to the EFR3 family. Component of a phosphatidylinositol 4-kinase (PI4K) complex. Palmitoylated at its N-terminus, anchoring the protein to the plasma membrane.

It localises to the cell membrane. Component of a complex required to localize phosphatidylinositol 4-kinase (PI4K) to the plasma membrane. The complex acts as a regulator of phosphatidylinositol 4-phosphate (PtdIns(4)P) synthesis. In the complex, efr3b probably acts as the membrane-anchoring component. The polypeptide is Protein EFR3 homolog B (efr3b) (Danio rerio (Zebrafish)).